The chain runs to 301 residues: Tail tube protein (301 aa).

This sequence belongs to the skunalikevirus tail tube protein family. As to quaternary structure, homohexamer. Interacts with the tail terminator protein.

The protein localises to the virion. In terms of biological role, forms the cylindrical rigid tail tube with a 4 nm wide central channel for DNA ejection. The tube is composed of 31 hexameric rings. The chain is Tail tube protein from Lactococcus phage SK1 (Lactococcus lactis bacteriophage SK1).